The sequence spans 892 residues: MGGRAGLDDGRGAEGVVRRGSRVAEGAAGAAAWGDDADEAGGLGAGSSEPAAVGQPARDAEHRAASGAGLFGWTVPPGERVSELDRLRRGPVRVSGPQMKRALERAEEIAAFGMGAVDVSRIPPRRLAELSRYGVDGKASLLRRHSDARRLATLLATTVYLTSRAVDDALDLLEVLIATKLLARAERESAKEKLKSLPRVERASAKLATAFQVVFDTTSEQVDTDTGEIPPPKVESLEGMWAAIEQVVPRHELAAAIAALFELTPPLDSDADEAWRAMLINRFGTVRPFLKLLVSVVDFDATPEGEAVLGALLSLPELMGRKKVGPAEIDADLLTGSWRRLVLAAPHLEPGTVDWKAYTFCVLEHLHRMLRSKQVFAKNSSKWGDPRAKLLAGQAWQQARPTVLASLNLPGEADGHLAARAALLDGTYREVAARVPDSAQIVFDDDGRLHFAALEPEPEPASLLELRAAVNAMLPRVDLPEVLLEVFSWTGADQAFTSVTAGEARLKDLNVTIAALLVAHGCNVGYTPVMGGADPLKYGRLSHVDQTYLRLATYRAANATLIEHQASIPLAQTWGGGLVASVDGMRFVVPVPSVYARPNPKYFGRRGGATWLNMINDQAAGLGGKVVAGTPRDSLYVLDVLYDRDGGKRPEMIVTDTASYSDIVFGLLTLAGFAYAPQLADLPDQKMWRVDRTADYGAFQDAARGRIDLARIERHWEDILRIIGSIHTGAVRAYDVIRMLSRDGRPTPLGDAIAHYGRIAKTLHILRLADEPGYRRQIKVQANLQEGRHALARKIFHGKQGQLYQRYQDGMEDQIGALGLVLNALVLFNTRYMDAAVNQLRADGFDVRDEDVARLSPFVRHHINMLGRYSFQLPDLPGGLRPLRDKTATDDM.

Positions 1-12 (MGGRAGLDDGRG) are enriched in basic and acidic residues. The interval 1–63 (MGGRAGLDDG…GQPARDAEHR (63 aa)) is disordered. A compositionally biased stretch (low complexity) spans 23–34 (VAEGAAGAAAWG).

The protein belongs to the transposase 7 family.

Its function is as follows. Required for transposition of transposon Tn4556. The protein is Transposase for transposon Tn4556 (tnpA) of Streptomyces fradiae (Streptomyces roseoflavus).